The primary structure comprises 539 residues: Phosphoenolpyruvate carboxykinase (ATP) (539 aa).

Positions 64, 206, and 212 each coordinate substrate. Residues K212, H231, and 247-255 (GLSGTGKTT) contribute to the ATP site. Residues K212 and H231 each coordinate Mn(2+). D268 lines the Mn(2+) pocket. ATP contacts are provided by residues E296, R332, 448–449 (RI), and T454. A substrate-binding site is contributed by R332.

This sequence belongs to the phosphoenolpyruvate carboxykinase (ATP) family. In terms of assembly, monomer. Mn(2+) is required as a cofactor.

It is found in the cytoplasm. It carries out the reaction oxaloacetate + ATP = phosphoenolpyruvate + ADP + CO2. The protein operates within carbohydrate biosynthesis; gluconeogenesis. Involved in the gluconeogenesis. Catalyzes the conversion of oxaloacetate (OAA) to phosphoenolpyruvate (PEP) through direct phosphoryl transfer between the nucleoside triphosphate and OAA. This Citrobacter koseri (strain ATCC BAA-895 / CDC 4225-83 / SGSC4696) protein is Phosphoenolpyruvate carboxykinase (ATP).